We begin with the raw amino-acid sequence, 305 residues long: UDP-3-O-acyl-N-acetylglucosamine deacetylase (305 aa).

Residues His79, His238, and Asp242 each contribute to the Zn(2+) site. Catalysis depends on His265, which acts as the Proton donor.

The protein belongs to the LpxC family. It depends on Zn(2+) as a cofactor.

The enzyme catalyses a UDP-3-O-[(3R)-3-hydroxyacyl]-N-acetyl-alpha-D-glucosamine + H2O = a UDP-3-O-[(3R)-3-hydroxyacyl]-alpha-D-glucosamine + acetate. It participates in glycolipid biosynthesis; lipid IV(A) biosynthesis; lipid IV(A) from (3R)-3-hydroxytetradecanoyl-[acyl-carrier-protein] and UDP-N-acetyl-alpha-D-glucosamine: step 2/6. Functionally, catalyzes the hydrolysis of UDP-3-O-myristoyl-N-acetylglucosamine to form UDP-3-O-myristoylglucosamine and acetate, the committed step in lipid A biosynthesis. This chain is UDP-3-O-acyl-N-acetylglucosamine deacetylase, found in Edwardsiella ictaluri (strain 93-146).